A 249-amino-acid chain; its full sequence is Aspartate/glutamate leucyltransferase (249 aa).

This sequence belongs to the R-transferase family. Bpt subfamily.

Its subcellular location is the cytoplasm. It carries out the reaction N-terminal L-glutamyl-[protein] + L-leucyl-tRNA(Leu) = N-terminal L-leucyl-L-glutamyl-[protein] + tRNA(Leu) + H(+). It catalyses the reaction N-terminal L-aspartyl-[protein] + L-leucyl-tRNA(Leu) = N-terminal L-leucyl-L-aspartyl-[protein] + tRNA(Leu) + H(+). Functionally, functions in the N-end rule pathway of protein degradation where it conjugates Leu from its aminoacyl-tRNA to the N-termini of proteins containing an N-terminal aspartate or glutamate. In Brucella canis (strain ATCC 23365 / NCTC 10854 / RM-666), this protein is Aspartate/glutamate leucyltransferase.